The chain runs to 1537 residues: MWPPQLLILTMLLAPVVHGGKHNERHPALAAPLRHAERSPGGALPPRHLLQQPAAERSTAHRGQGPRGAARGVRGPGAPGAQIAAQAFSRAPIPMAVVRRELSCESYPIELRCPGTDVIMIESANYGRTDDKICDSDPAQMENIRCYLPDAYKIMSQRCNNRTQCAVVAGPDVFPDPCPGTYKYLEVQYECVPYKVEQKVFLCPGLLKGVYQSEHLFESDHQSGAWCKDPLQASDKIYYMPWTPYRTDTLTEYSSKDDFIAGRPTTTYKLPHRVDGTGFVVYDGALFFNKERTRNIVKFDLRTRIKSGEAIIANANYHDTSPYRWGGKSDIDLAVDENGLWVIYATEQNNGKIVISQLNPYTLRIEGTWDTAYDKRSASNAFMICGILYVVKSVYEDDDNEATGNKIDYIYNTDQSKDSLVDVPFPNSYQYIAAVDYNPRDNLLYVWNNYHVVKYSLDFGPLDSRSGPVHHGQVSYISPPIHLDSELERPPVRGISTTGSLGMGSTTTSTTLRTTTWNIGRSTTASLPGRRNRSTSTPSPAVEVLDDVTTHLPSAASQIPAMEESCEAVEAREIMWFKTRQGQVAKQPCPAGTIGVSTYLCLAPDGIWDPQGPDLSNCSSPWVNHITQKLKSGETAANIARELAEQTRNHLNAGDITYSVRAMDQLVGLLDVQLRNLTPGGKDSAARSLNKLQKRERSCRAYVQAMVETVNNLLQPQALNAWRDLTTSDQLRAATMLLDTVEESAFVLADNLLKTDIVRENTDNIQLEVARLSTEGNLEDLKFPENMGHGSTIQLSANTLKQNGRNGEIRVAFVLYNNLGPYLSTENASMKLGTEAMSTNHSVIVNSPVITAAINKEFSNKVYLADPVVFTVKHIKQSEENFNPNCSFWSYSKRTMTGYWSTQGCRLLTTNKTHTTCSCNHLTNFAVLMAHVEVKHSDAVHDLLLDVITWVGILLSLVCLLICIFTFCFFRGLQSDRNTIHKNLCISLFVAELLFLIGINRTDQPIACAVFAALLHFFFLAAFTWMFLEGVQLYIMLVEVFESEHSRRKYFYLVGYGMPALIVAVSAAVDYRSYGTDKVCWLRLDTYFIWSFIGPATLIIMLNVIFLGIALYKMFHHTAILKPESGCLDNINYEDNRPFIKSWVIGAIALLCLLGLTWAFGLMYINESTVIMAYLFTIFNSLQGMFIFIFHCVLQKKVRKEYGKCLRTHCCSGKSTESSIGSGKTSGSRTPGRYSTGSQSRIRRMWNDTVRKQSESSFITGDINSSASLNREGLLNNARDTSVMDTLPLNGNHGNSYSIAGGEYLSNCVQIIDRGYNHNETALEKKILKELTSNYIPSYLNNHERSSEQNRNMMNKLVNNLGSGSEDDAIVLDDAASFNHEESLGLELIHEESDAPLLPPRVYSTDNHQPHHYSRRRFPQDHSESFFPLLTDEHTEDLQSPHRDSLYTSMPALAGVPAADSVTTSTQTEAAAAKGGDAEDVYYKSMPNLGSRNHVHPLHAYYQLGRGSSDGFIVPPNKDGASPEGTSKGPAHLVTSL.

Positions 1 to 19 (MWPPQLLILTMLLAPVVHG) are cleaved as a signal peptide. At 20 to 943 (GKHNERHPAL…VKHSDAVHDL (924 aa)) the chain is on the extracellular side. The tract at residues 53–80 (PAAERSTAHRGQGPRGAARGVRGPGAPG) is disordered. The region spanning 103-192 (SCESYPIELR…KYLEVQYECV (90 aa)) is the SUEL-type lectin domain. 5 disulfides stabilise this stretch: cysteine 104–cysteine 134, cysteine 113–cysteine 191, cysteine 146–cysteine 178, cysteine 159–cysteine 165, and cysteine 203–cysteine 385. N-linked (GlcNAc...) asparagine glycosylation occurs at asparagine 161. Residues 202–461 (LCPGLLKGVY…VVKYSLDFGP (260 aa)) form the Olfactomedin-like domain. An interaction with FLRT3 region spans residues 317–347 (YHDTSPYRWGGKSDIDLAVDENGLWVIYATE). Ca(2+)-binding residues include aspartate 332, asparagine 380, alanine 381, and valine 435. A disordered region spans residues 521 to 540 (RSTTASLPGRRNRSTSTPSP). N-linked (GlcNAc...) asparagine glycans are attached at residues asparagine 532, asparagine 617, asparagine 827, asparagine 840, asparagine 885, and asparagine 911. The region spanning 756–935 (DIVRENTDNI…AVLMAHVEVK (180 aa)) is the GAIN-B domain. Disulfide bonds link cysteine 886-cysteine 917 and cysteine 905-cysteine 919. Positions 886–935 (CSFWSYSKRTMTGYWSTQGCRLLTTNKTHTTCSCNHLTNFAVLMAHVEVK) are GPS. The stachel stretch occupies residues 923–939 (TNFAVLMAHVEVKHSDA). A helical transmembrane segment spans residues 944–969 (LLDVITWVGILLSLVCLLICIFTFCF). Residues 970–975 (FRGLQS) lie on the Cytoplasmic side of the membrane. The helical transmembrane segment at 976–999 (DRNTIHKNLCISLFVAELLFLIGI) threads the bilayer. N-linked (GlcNAc...) asparagine glycosylation occurs at asparagine 1000. Residues 1000-1006 (NRTDQPI) lie on the Extracellular side of the membrane. Residues 1007-1034 (ACAVFAALLHFFFLAAFTWMFLEGVQLY) form a helical membrane-spanning segment. Residues cysteine 1008 and cysteine 1080 are joined by a disulfide bond. Topologically, residues 1035-1048 (IMLVEVFESEHSRR) are cytoplasmic. The chain crosses the membrane as a helical span at residues 1049–1071 (KYFYLVGYGMPALIVAVSAAVDY). Residues 1072–1086 (RSYGTDKVCWLRLDT) are Extracellular-facing. The helical transmembrane segment at 1087–1112 (YFIWSFIGPATLIIMLNVIFLGIALY) threads the bilayer. Topologically, residues 1113–1142 (KMFHHTAILKPESGCLDNINYEDNRPFIKS) are cytoplasmic. A helical membrane pass occupies residues 1143 to 1163 (WVIGAIALLCLLGLTWAFGLM). The Extracellular segment spans residues 1164 to 1168 (YINES). N-linked (GlcNAc...) asparagine glycosylation is present at asparagine 1166. The helical transmembrane segment at 1169–1195 (TVIMAYLFTIFNSLQGMFIFIFHCVLQ) threads the bilayer. At 1196–1537 (KKVRKEYGKC…KGPAHLVTSL (342 aa)) the chain is on the cytoplasmic side. Residues 1213-1237 (GKSTESSIGSGKTSGSRTPGRYSTG) are disordered. 2 positions are modified to phosphoserine: serine 1254 and serine 1522. The tract at residues 1512 to 1537 (FIVPPNKDGASPEGTSKGPAHLVTSL) is disordered. Positions 1532 to 1537 (HLVTSL) match the PDZ-binding motif.

The protein belongs to the G-protein coupled receptor 2 family. LN-TM7 subfamily. As to quaternary structure, heterodimer of 2 chains generated by proteolytic processing; the large extracellular N-terminal fragment and the membrane-bound C-terminal fragment predominantly remain associated and non-covalently linked. Interacts (via olfactomedin-like domain) with FLRT1 (via extracellular domain). Interacts (via olfactomedin-like domain) with FLRT2 (via extracellular domain). Interacts (via olfactomedin-like domain) with FLRT3 (via extracellular domain); the interaction is direct. Interacts (via extracellular domain) with TENM1. Interacts (via extracellular domain) with TENM2. Interacts (via extracellular domain) with TENM3. Identified in a complex with FLRT3 and UNC5B; does not interact with UNC5B by itself. Identified in a complex with FLRT3 and UNC5D; does not interact with UNC5D by itself. Interacts (via PDZ-binding motif) with SHANK3. Interacts (via PDZ-binding motif) with DLG4. Autoproteolytically processed at the GPS region of the GAIN-B domain; this cleavage modulates receptor activity. In terms of processing, O-glycosylated (major) and N-glycosylated. In terms of tissue distribution, localizes to postsynaptic spines in non-overlapping dendritic domains of CA1-region pyramidal neurons: specifically localizes to excitatory synapses in the S.oriens and S.radiatum, corresponding to distinct presynaptic inputs onto CA1-region pyramidal neurons.

It is found in the cell membrane. The protein localises to the postsynaptic cell membrane. The protein resides in the cell projection. It localises to the axon. Its subcellular location is the cell junction. With respect to regulation, forms a heterodimer of 2 chains generated by proteolytic processing that remain associated through non-covalent interactions mediated by the GAIN-B domain. In the inactivated receptor, the Stachel sequence (also named stalk) is embedded in the GAIN-B domain, where it adopts a beta-strand conformation. On activation, the Stachel moves into the 7 transmembrane region and adopts a twisted hook-shaped configuration that forms contacts within the receptor, leading to coupling of a G-alpha protein, which activates signaling. The cleaved GAIN-B and N-terminal domains can then dissociate from the rest of the receptor. Its function is as follows. Orphan adhesion G-protein coupled receptor (aGPCR), which mediates synapse specificity. Ligand binding causes a conformation change that triggers signaling via guanine nucleotide-binding proteins (G proteins) and modulates the activity of downstream effectors. ADGRL3 is coupled with different classes of G alpha proteins, such as G(12)/G(13), G(s), G(i) or G(q), depending on the context. Coupling to G(12)/G(13) G proteins, which mediates the activation Rho small GTPases is the most efficient. Following G-protein coupled receptor activation, associates with cell adhesion molecules that are expressed at the surface of adjacent cells to direct synapse specificity. Specifically mediates the establishment of Schaffer-collateral synapses formed by CA3-region axons on CA1-region pyramidal neurons in the hippocampus. Localizes to postsynaptic spines in excitatory synapses in the S.oriens and S.radiatum and interacts with presynaptic cell adhesion molecules FLRT3 and TENM2, promoting synapse formation. Plays a role in the development of glutamatergic synapses in the cortex. Important in determining the connectivity rates between the principal neurons in the cortex. Orphan adhesion G-protein coupled receptor (aGPCR), which mediates synapse specificity. Ligand binding causes a conformation change that triggers signaling via guanine nucleotide-binding proteins (G proteins) and modulates the activity of downstream effectors, such as adenylate cyclase. Isoform 1 is specifically coupled to G(s) G proteins and mediates activation of adenylate cyclase activity. Following G-protein coupled receptor activation, undergoes liquid-liquid phase transition, associates with (1) cell adhesion molecules that are expressed at the surface of adjacent cells, as well as (2) PDZ-containing proteins, such as SHANK3 and DLG4, in the cytoplasm to direct synapse formation. Functionally, orphan adhesion G-protein coupled receptor (aGPCR). Ligand binding causes a conformation change that triggers signaling via guanine nucleotide-binding proteins (G proteins) and modulates the activity of downstream effectors, such as RhoA pathway. Isoform 7 is coupled to G(12) and/or G(13) G proteins (GNA12 and GNA13, respectively) and mediates the activation Rho small GTPases. This Mus musculus (Mouse) protein is Adhesion G protein-coupled receptor L3.